A 310-amino-acid polypeptide reads, in one-letter code: ADP-L-glycero-D-manno-heptose-6-epimerase (310 aa).

Residues 10–11 (FI), 31–32 (DN), K38, K53, 75–79 (EGACS), and N92 each bind NADP(+). Y140 functions as the Proton acceptor in the catalytic mechanism. Residue K144 coordinates NADP(+). Residue N169 coordinates substrate. Residues V170 and K178 each contribute to the NADP(+) site. The active-site Proton acceptor is K178. Substrate-binding positions include S180, H187, 201–204 (FEGS), R209, and Y272.

The protein belongs to the NAD(P)-dependent epimerase/dehydratase family. HldD subfamily. In terms of assembly, homopentamer. It depends on NADP(+) as a cofactor.

The enzyme catalyses ADP-D-glycero-beta-D-manno-heptose = ADP-L-glycero-beta-D-manno-heptose. It participates in nucleotide-sugar biosynthesis; ADP-L-glycero-beta-D-manno-heptose biosynthesis; ADP-L-glycero-beta-D-manno-heptose from D-glycero-beta-D-manno-heptose 7-phosphate: step 4/4. Catalyzes the interconversion between ADP-D-glycero-beta-D-manno-heptose and ADP-L-glycero-beta-D-manno-heptose via an epimerization at carbon 6 of the heptose. This is ADP-L-glycero-D-manno-heptose-6-epimerase from Citrobacter koseri (strain ATCC BAA-895 / CDC 4225-83 / SGSC4696).